We begin with the raw amino-acid sequence, 1492 residues long: Copper-transporting ATPase 1 (1492 aa).

At 1-645 the chain is on the cytoplasmic side; it reads MEPNMDANSI…KREIKQWRGS (645 aa). HMA domains follow at residues 8-74 and 85-151; these read NSIT…FDAL and TNTV…LDMG. 3 residues coordinate Cu(+): Thr18, Cys19, and Cys22. Thr152 carries the post-translational modification Phosphothreonine. One can recognise an HMA 3 domain in the interval 171-237; sequence VLLKMRVEGM…QIEAVGFPAF (67 aa). Cu(+) is bound by residues Cys182 and Cys185. The residue at position 270 (Ser270) is a Phosphoserine. The region spanning 277–343 is the HMA 4 domain; it reads SAITFTIDGM…AIEAVSPGQY (67 aa). Cu(+)-binding residues include Cys288 and Cys291. The residue at position 327 (Thr327) is a Phosphothreonine. Phosphoserine occurs at positions 339, 353, 357, and 362. 3 consecutive HMA domains span residues 377 to 443, 480 to 546, and 556 to 622; these read QEVV…FDAV, NKCY…FGAV, and GILE…FEAS. Cys388, Cys391, Cys491, Cys494, Cys567, and Cys570 together coordinate Cu(+). Residues 646–667 form a helical membrane-spanning segment; sequence FLVSLFFCIPVMGLMIYMMVMD. At 668–706 the chain is on the extracellular side; it reads HHLATLNHNQNMSNEEMINMHSSMFLERQILPGLSIMNL. Asn678 is a glycosylation site (N-linked (GlcNAc...) asparagine). The chain crosses the membrane as a helical span at residues 707–726; that stretch reads LSLLLCLPVQFCGGWYFYIQ. At 727-733 the chain is on the cytoplasmic side; the sequence is AYKALRH. Residues 734–754 traverse the membrane as a helical segment; that stretch reads KTANMDVLIVLATTIAFAYSL. Residues 755-773 lie on the Extracellular side of the membrane; it reads VILLVAMYERAKVNPITFF. Residues 774 to 794 traverse the membrane as a helical segment; sequence DTPPMLFVFIALGRWLEHIAK. Residues 795 to 927 lie on the Cytoplasmic side of the membrane; that stretch reads GKTSEALAKL…SKAPIQQFAD (133 aa). A helical transmembrane segment spans residues 928 to 951; it reads KLSGYFVPFIVLVSIVTLLVWIII. The Extracellular segment spans residues 952 to 981; it reads GFQNFEIVEAYFPGYNRSISRTETIIRFAF. The chain crosses the membrane as a helical span at residues 982-1003; it reads QASITVLCIACPCSLGLATPTA. The Cytoplasmic segment spans residues 1004-1348; sequence VMVGTGVGAQ…LSRKTVKRIR (345 aa). The active-site 4-aspartylphosphate intermediate is the Asp1036. Glu1073 is an ATP binding site. A Phosphothreonine modification is found at Thr1204. Mg(2+) is bound by residues Asp1293 and Asp1297. Residues 1349 to 1366 form a helical membrane-spanning segment; the sequence is INFVFALIYNLIGIPIAA. Topologically, residues 1367 to 1377 are extracellular; that stretch reads GVFLPIGLVLQ. A helical transmembrane segment spans residues 1378-1397; sequence PWMGSAAMAASSVSVVLSSL. Residues 1398 to 1492 lie on the Cytoplasmic side of the membrane; it reads FLKLYRKPTY…DFREDDDTTL (95 aa). Residues Ser1422, Ser1424, Ser1452, Ser1455, and Ser1458 each carry the phosphoserine modification. Residues 1459–1460 carry the Endocytosis signal motif; that stretch reads LL. Ser1461, Ser1465, Ser1468, and Ser1478 each carry phosphoserine. A PDZD11-binding region spans residues 1478 to 1492; that stretch reads SLLVGDFREDDDTTL. Positions 1479–1480 match the Endocytosis signal motif; it reads LL.

The protein belongs to the cation transport ATPase (P-type) (TC 3.A.3) family. Type IB subfamily. In terms of assembly, monomer. Interacts with PDZD11. Interacts with ATOX1 and COMMD1. Interacts with TYRP1. Directly interacts with SOD3; this interaction is copper-dependent and is required for SOD3 activity. Expressed in hippocampal neuron (at protein level). Expressed in anterior pituitary gland (at protein level).

It localises to the golgi apparatus. The protein resides in the trans-Golgi network membrane. It is found in the cell membrane. Its subcellular location is the melanosome membrane. The protein localises to the early endosome membrane. It localises to the cell projection. The protein resides in the axon. It is found in the dendrite. Its subcellular location is the postsynaptic density. The enzyme catalyses Cu(+)(in) + ATP + H2O = Cu(+)(out) + ADP + phosphate + H(+). Functionally, ATP-driven copper (Cu(+)) ion pump that plays an important role in intracellular copper ion homeostasis. Within a catalytic cycle, acquires Cu(+) ion from donor protein on the cytoplasmic side of the membrane and delivers it to acceptor protein on the lumenal side. The transfer of Cu(+) ion across the membrane is coupled to ATP hydrolysis and is associated with a transient phosphorylation that shifts the pump conformation from inward-facing to outward-facing state. Under physiological conditions, at low cytosolic copper concentration, it is localized at the trans-Golgi network (TGN) where it transfers Cu(+) ions to cuproenzymes of the secretory pathway. Upon elevated cytosolic copper concentrations, it relocalizes to the plasma membrane where it is responsible for the export of excess Cu(+) ions. May play a dual role in neuron function and survival by regulating cooper efflux and neuronal transmission at the synapse as well as by supplying Cu(+) ions to enzymes such as PAM, TYR and SOD3. In the melanosomes of pigmented cells, provides copper cofactor to TYR to form an active TYR holoenzyme for melanin biosynthesis. The polypeptide is Copper-transporting ATPase 1 (Rattus norvegicus (Rat)).